Here is a 305-residue protein sequence, read N- to C-terminus: UDP-3-O-acyl-N-acetylglucosamine deacetylase (305 aa).

Positions 79, 238, and 242 each coordinate Zn(2+). The active-site Proton donor is His265.

Belongs to the LpxC family. It depends on Zn(2+) as a cofactor.

It catalyses the reaction a UDP-3-O-[(3R)-3-hydroxyacyl]-N-acetyl-alpha-D-glucosamine + H2O = a UDP-3-O-[(3R)-3-hydroxyacyl]-alpha-D-glucosamine + acetate. It participates in glycolipid biosynthesis; lipid IV(A) biosynthesis; lipid IV(A) from (3R)-3-hydroxytetradecanoyl-[acyl-carrier-protein] and UDP-N-acetyl-alpha-D-glucosamine: step 2/6. In terms of biological role, catalyzes the hydrolysis of UDP-3-O-myristoyl-N-acetylglucosamine to form UDP-3-O-myristoylglucosamine and acetate, the committed step in lipid A biosynthesis. The polypeptide is UDP-3-O-acyl-N-acetylglucosamine deacetylase (Salmonella typhi).